The chain runs to 74 residues: Exodeoxyribonuclease 7 small subunit (74 aa).

The protein belongs to the XseB family. As to quaternary structure, heterooligomer composed of large and small subunits.

Its subcellular location is the cytoplasm. It carries out the reaction Exonucleolytic cleavage in either 5'- to 3'- or 3'- to 5'-direction to yield nucleoside 5'-phosphates.. Bidirectionally degrades single-stranded DNA into large acid-insoluble oligonucleotides, which are then degraded further into small acid-soluble oligonucleotides. The polypeptide is Exodeoxyribonuclease 7 small subunit (Haemophilus ducreyi (strain 35000HP / ATCC 700724)).